Reading from the N-terminus, the 335-residue chain is Auxin-responsive protein IAA6 (335 aa).

Positions 51–55 (LKLGL) match the EAR-like (transcriptional repression) motif. Disordered stretches follow at residues 81-102 (LSFFPKHSKTTSSTTTTTGAKR), 143-180 (KKGCCPPPPPPHGAPATPARNRPQTQGRGAAAPVVGWP), and 188-207 (NLASSSSSKHSPEPQNDNAN). A PB1 domain is found at 217–321 (NPLVKINMDG…TAKRLRVLRS (105 aa)).

Belongs to the Aux/IAA family. Homodimers and heterodimers. In terms of tissue distribution, highly expressed in roots. Expressed in shoots and flowers.

Its subcellular location is the nucleus. Functionally, aux/IAA proteins are short-lived transcriptional factors that function as repressors of early auxin response genes at low auxin concentrations. In Oryza sativa subsp. japonica (Rice), this protein is Auxin-responsive protein IAA6 (IAA6).